The following is a 224-amino-acid chain: Heme response regulator HssR (224 aa).

The Response regulatory domain occupies 3-116 (NCLIVDDDKK…ELLFRIKAVL (114 aa)). The residue at position 52 (Asp52) is a 4-aspartylphosphate. The segment at residues 124 to 222 (DNELQLGNLI…VRGQGYRVDQ (99 aa)) is a DNA-binding region (ompR/PhoB-type).

Post-translationally, phosphorylated by HssS.

It localises to the cytoplasm. Functionally, member of the two-component regulatory system HssS/HssR involved in intracellular heme homeostasis and tempering of staphylococcal virulence. Phosphorylated HssR binds to a direct repeat sequence within hrtAB promoter and activates the expression of hrtAB, an efflux pump, in response to extracellular heme, hemin, hemoglobin or blood. The sequence is that of Heme response regulator HssR (hssR) from Staphylococcus epidermidis (strain ATCC 35984 / DSM 28319 / BCRC 17069 / CCUG 31568 / BM 3577 / RP62A).